The chain runs to 138 residues: Phospholipase A2 homolog mojave toxin acidic chain (138 aa).

The N-terminal stretch at 1-40 is a signal peptide; sequence MRALWIVAVLLVGVEGSLVEFETLIMKIAGRSGISYYSSY. 7 cysteine pairs are disulfide-bonded: C42-C131, C44-C60, C59-C111, C65-C138, C66-C104, C73-C97, and C91-C102. The propeptide occupies 81-83; sequence TYR. Pyrrolidone carboxylic acid is present on Q84. Positions 120 to 126 are excised as a propeptide; that stretch reads DYKYLRF.

The protein belongs to the phospholipase A2 family. Group II subfamily. D49 sub-subfamily. Heterodimer of an acidic and a basic chain. The acidic subunit is non-toxic, without enzymatic activity and comprises 3 peptides that are cross-linked by 5 disulfide bridges. The basic subunit is toxic, has phospholipase A2 activity and is composed of a single chain. Ca(2+) is required as a cofactor. In terms of tissue distribution, expressed by the venom gland.

The protein resides in the secreted. Functionally, snake venom phospholipase A2 (PLA2) that inhibits neuromuscular transmission by blocking acetylcholine release from the nerve termini. The protein is Phospholipase A2 homolog mojave toxin acidic chain of Crotalus scutulatus scutulatus (Mojave rattlesnake).